The chain runs to 470 residues: Uronate isomerase (470 aa).

It belongs to the metallo-dependent hydrolases superfamily. Uronate isomerase family.

The enzyme catalyses D-glucuronate = D-fructuronate. The catalysed reaction is aldehydo-D-galacturonate = keto-D-tagaturonate. It functions in the pathway carbohydrate metabolism; pentose and glucuronate interconversion. This chain is Uronate isomerase, found in Klebsiella pneumoniae (strain 342).